Here is a 430-residue protein sequence, read N- to C-terminus: Glutamate-1-semialdehyde 2,1-aminomutase (430 aa).

Lys-265 is subject to N6-(pyridoxal phosphate)lysine.

This sequence belongs to the class-III pyridoxal-phosphate-dependent aminotransferase family. HemL subfamily. In terms of assembly, homodimer. Pyridoxal 5'-phosphate serves as cofactor.

The protein resides in the cytoplasm. It carries out the reaction (S)-4-amino-5-oxopentanoate = 5-aminolevulinate. The protein operates within porphyrin-containing compound metabolism; protoporphyrin-IX biosynthesis; 5-aminolevulinate from L-glutamyl-tRNA(Glu): step 2/2. This chain is Glutamate-1-semialdehyde 2,1-aminomutase, found in Shewanella putrefaciens (strain CN-32 / ATCC BAA-453).